The sequence spans 182 residues: Peptidyl-tRNA hydrolase (182 aa).

TRNA is bound at residue Tyr14. The active-site Proton acceptor is His19. The tRNA site is built by Tyr65, Asn67, and Asn113.

It belongs to the PTH family. Monomer.

The protein localises to the cytoplasm. The catalysed reaction is an N-acyl-L-alpha-aminoacyl-tRNA + H2O = an N-acyl-L-amino acid + a tRNA + H(+). Functionally, hydrolyzes ribosome-free peptidyl-tRNAs (with 1 or more amino acids incorporated), which drop off the ribosome during protein synthesis, or as a result of ribosome stalling. In terms of biological role, catalyzes the release of premature peptidyl moieties from peptidyl-tRNA molecules trapped in stalled 50S ribosomal subunits, and thus maintains levels of free tRNAs and 50S ribosomes. The chain is Peptidyl-tRNA hydrolase from Rickettsia peacockii (strain Rustic).